A 218-amino-acid chain; its full sequence is Uracil-DNA glycosylase (218 aa).

The active-site Proton acceptor is D59.

Belongs to the uracil-DNA glycosylase (UDG) superfamily. UNG family.

Its subcellular location is the cytoplasm. It carries out the reaction Hydrolyzes single-stranded DNA or mismatched double-stranded DNA and polynucleotides, releasing free uracil.. Excises uracil residues from the DNA which can arise as a result of misincorporation of dUMP residues by DNA polymerase or due to deamination of cytosine. This chain is Uracil-DNA glycosylase, found in Staphylococcus aureus (strain MSSA476).